A 136-amino-acid chain; its full sequence is Transcription antitermination protein NusB (136 aa).

The protein belongs to the NusB family.

Its function is as follows. Involved in transcription antitermination. Required for transcription of ribosomal RNA (rRNA) genes. Binds specifically to the boxA antiterminator sequence of the ribosomal RNA (rrn) operons. The protein is Transcription antitermination protein NusB of Arthrobacter sp. (strain FB24).